The chain runs to 158 residues: Cyclic pyranopterin monophosphate synthase (158 aa).

Residues 76 to 78 (LCH) and 114 to 115 (ME) each bind substrate. Asp129 is a catalytic residue.

This sequence belongs to the MoaC family. As to quaternary structure, homohexamer; trimer of dimers.

The enzyme catalyses (8S)-3',8-cyclo-7,8-dihydroguanosine 5'-triphosphate = cyclic pyranopterin phosphate + diphosphate. It functions in the pathway cofactor biosynthesis; molybdopterin biosynthesis. Its function is as follows. Catalyzes the conversion of (8S)-3',8-cyclo-7,8-dihydroguanosine 5'-triphosphate to cyclic pyranopterin monophosphate (cPMP). This is Cyclic pyranopterin monophosphate synthase from Brucella anthropi (strain ATCC 49188 / DSM 6882 / CCUG 24695 / JCM 21032 / LMG 3331 / NBRC 15819 / NCTC 12168 / Alc 37) (Ochrobactrum anthropi).